A 207-amino-acid polypeptide reads, in one-letter code: Large ribosomal subunit protein uL4 (207 aa).

The segment at His49–Ile78 is disordered.

Belongs to the universal ribosomal protein uL4 family. As to quaternary structure, part of the 50S ribosomal subunit.

One of the primary rRNA binding proteins, this protein initially binds near the 5'-end of the 23S rRNA. It is important during the early stages of 50S assembly. It makes multiple contacts with different domains of the 23S rRNA in the assembled 50S subunit and ribosome. Its function is as follows. Forms part of the polypeptide exit tunnel. The polypeptide is Large ribosomal subunit protein uL4 (Streptococcus equi subsp. zooepidemicus (strain MGCS10565)).